A 78-amino-acid chain; its full sequence is Large ribosomal subunit protein bL28 (78 aa).

It belongs to the bacterial ribosomal protein bL28 family.

This Synechococcus sp. (strain WH7803) protein is Large ribosomal subunit protein bL28.